A 185-amino-acid chain; its full sequence is Large ribosomal subunit protein uL5 (185 aa).

Belongs to the universal ribosomal protein uL5 family. In terms of assembly, part of the 50S ribosomal subunit; part of the 5S rRNA/L5/L18/L25 subcomplex. Contacts the 5S rRNA and the P site tRNA. Forms a bridge to the 30S subunit in the 70S ribosome.

Functionally, this is one of the proteins that bind and probably mediate the attachment of the 5S RNA into the large ribosomal subunit, where it forms part of the central protuberance. In the 70S ribosome it contacts protein S13 of the 30S subunit (bridge B1b), connecting the 2 subunits; this bridge is implicated in subunit movement. Contacts the P site tRNA; the 5S rRNA and some of its associated proteins might help stabilize positioning of ribosome-bound tRNAs. In Bartonella tribocorum (strain CIP 105476 / IBS 506), this protein is Large ribosomal subunit protein uL5.